The primary structure comprises 238 residues: TATA-box-binding protein (238 aa).

The interval Met1–Gly58 is disordered. Positions Glu27–Asp49 are enriched in basic and acidic residues. 2 repeat units span residues Leu65–Ile141 and Ile155–Leu232.

This sequence belongs to the TBP family. Belongs to the TFIID complex together with the TBP-associated factors (TAFs). Binds DNA as monomer.

It is found in the nucleus. Its function is as follows. General transcription factor that functions at the core of the DNA-binding multiprotein factor TFIID. Binding of TFIID to the TATA box is the initial transcriptional step of the pre-initiation complex (PIC), playing a role in the activation of eukaryotic genes transcribed by RNA polymerase II. The polypeptide is TATA-box-binding protein (TBP1) (Candida albicans (strain SC5314 / ATCC MYA-2876) (Yeast)).